We begin with the raw amino-acid sequence, 285 residues long: GPN-loop GTPase 3 (285 aa).

Residue 13–18 coordinates GTP; that stretch reads GSGKST. Positions 70 to 72 match the Gly-Pro-Asn (GPN)-loop; involved in dimer interface motif; it reads GPN. 172-175 is a binding site for GTP; sequence TKID. The tract at residues 253-276 is disordered; the sequence is GEDLEPKEPPLENDDDDDDDEGDE. Over residues 263–275 the composition is skewed to acidic residues; it reads LENDDDDDDDEGD.

The protein belongs to the GPN-loop GTPase family. In terms of assembly, heterodimer with gpn1. Binds to RNA polymerase II (RNAPII).

Small GTPase required for proper localization of RNA polymerase II (RNAPII). May act at an RNAP assembly step prior to nuclear import. This is GPN-loop GTPase 3 (gpn3) from Dictyostelium discoideum (Social amoeba).